The sequence spans 698 residues: Trafficking protein particle complex III-specific subunit 85 (698 aa).

2 disordered regions span residues 82 to 125 and 678 to 698; these read VGQH…LFQR and VDSAPRPSEKNLTRTSVSFIG. The segment covering 678–689 has biased composition (basic and acidic residues); the sequence is VDSAPRPSEKNL.

This sequence belongs to the TRS85 family. As to quaternary structure, part of the multisubunit TRAPP (transport protein particle) III complex composed of BET3, BET5, TRS20, TRS23, TRS31, TRS33 and TRS85.

Its subcellular location is the preautophagosomal structure. Its function is as follows. Specific subunit of the TRAPP III complex that acts as an autophagy-specific guanine nucleotide exchange factor (GEF) for YPT1. TRS85 directs the TRAPP III complex to the phagophore assembly site (PAS) that is involved in autophagosome formation. Required for membrane expansion during autophagy and the CVT pathway. Required for sporulation. Has a role late in meiosis following DNA replication. The protein is Trafficking protein particle complex III-specific subunit 85 (TRS85) of Saccharomyces cerevisiae (strain ATCC 204508 / S288c) (Baker's yeast).